The primary structure comprises 59 residues: Flagellar basal-body rod protein FlgC (59 aa).

The protein belongs to the flagella basal body rod proteins family. The basal body constitutes a major portion of the flagellar organelle and consists of four rings (L,P,S, and M) mounted on a central rod. The rod consists of about 26 subunits of FlgG in the distal portion, and FlgB, FlgC and FlgF are thought to build up the proximal portion of the rod with about 6 subunits each.

It is found in the bacterial flagellum basal body. This Borrelia hermsii protein is Flagellar basal-body rod protein FlgC (flgC).